The primary structure comprises 381 residues: tRNA pseudouridine synthase D (381 aa).

Catalysis depends on Asp-81, which acts as the Nucleophile. Residues 160 to 335 (GMPNYFGSQR…TLGSRRFFWV (176 aa)) enclose the TRUD domain.

The protein belongs to the pseudouridine synthase TruD family.

The enzyme catalyses uridine(13) in tRNA = pseudouridine(13) in tRNA. Its function is as follows. Responsible for synthesis of pseudouridine from uracil-13 in transfer RNAs. This chain is tRNA pseudouridine synthase D, found in Helicobacter acinonychis (strain Sheeba).